The sequence spans 250 residues: GTP cyclohydrolase 1 type 2 homolog (250 aa).

5 residues coordinate a divalent metal cation: histidine 63, histidine 64, aspartate 100, histidine 218, and glutamate 222.

It belongs to the GTP cyclohydrolase I type 2/NIF3 family. Homohexamer.

In Pyrococcus horikoshii (strain ATCC 700860 / DSM 12428 / JCM 9974 / NBRC 100139 / OT-3), this protein is GTP cyclohydrolase 1 type 2 homolog.